A 459-amino-acid chain; its full sequence is Ribulose bisphosphate carboxylase large chain (459 aa).

Lysine 4 bears the N6,N6,N6-trimethyllysine mark. Asparagine 113 and threonine 163 together coordinate substrate. The Proton acceptor role is filled by lysine 165. Position 167 (lysine 167) interacts with substrate. Mg(2+) contacts are provided by lysine 191, aspartate 193, and glutamate 194. At lysine 191 the chain carries N6-carboxylysine. Histidine 284 serves as the catalytic Proton acceptor. Arginine 285, histidine 317, and serine 369 together coordinate substrate.

The protein belongs to the RuBisCO large chain family. Type I subfamily. As to quaternary structure, heterohexadecamer of 8 large chains and 8 small chains; disulfide-linked. The disulfide link is formed within the large subunit homodimers. The cofactor is Mg(2+). In terms of processing, the disulfide bond which can form in the large chain dimeric partners within the hexadecamer appears to be associated with oxidative stress and protein turnover.

The protein resides in the plastid. The protein localises to the chloroplast. The catalysed reaction is 2 (2R)-3-phosphoglycerate + 2 H(+) = D-ribulose 1,5-bisphosphate + CO2 + H2O. The enzyme catalyses D-ribulose 1,5-bisphosphate + O2 = 2-phosphoglycolate + (2R)-3-phosphoglycerate + 2 H(+). Functionally, ruBisCO catalyzes two reactions: the carboxylation of D-ribulose 1,5-bisphosphate, the primary event in carbon dioxide fixation, as well as the oxidative fragmentation of the pentose substrate in the photorespiration process. Both reactions occur simultaneously and in competition at the same active site. The sequence is that of Ribulose bisphosphate carboxylase large chain from Ceratopetalum gummiferum (New South Wales Christmas bush).